The chain runs to 655 residues: Probable alpha-galactosidase D (655 aa).

A signal peptide spans 1–16; that stretch reads MASVIALSLLLPAAFA. 2 N-linked (GlcNAc...) asparagine glycosylation sites follow: Asn87 and Asn93. An intrachain disulfide couples Cys126 to Cys153. The Nucleophile role is filled by Asp151. 196 to 200 lines the substrate pocket; the sequence is EWGID. The active-site Proton donor is Asp218. Residues Asn432, Asn482, Asn502, Asn540, and Asn579 are each glycosylated (N-linked (GlcNAc...) asparagine).

It belongs to the glycosyl hydrolase 27 family.

The protein resides in the secreted. The catalysed reaction is Hydrolysis of terminal, non-reducing alpha-D-galactose residues in alpha-D-galactosides, including galactose oligosaccharides, galactomannans and galactolipids.. Its function is as follows. Hydrolyzes a variety of simple alpha-D-galactoside as well as more complex molecules such as oligosaccharides and polysaccharides. The polypeptide is Probable alpha-galactosidase D (aglD) (Aspergillus terreus (strain NIH 2624 / FGSC A1156)).